The chain runs to 680 residues: Heterokaryon incompatibility protein 6, OR allele (680 aa).

Involved in the non-self-recognition during asexual growth of N.crassa. This process involves restriction of heterokaryon formation via genetic differences at 11 het loci, including mating type. In Neurospora crassa (strain ATCC 24698 / 74-OR23-1A / CBS 708.71 / DSM 1257 / FGSC 987), this protein is Heterokaryon incompatibility protein 6, OR allele (het-6).